The following is a 175-amino-acid chain: Respiratory supercomplex factor 1-B, mitochondrial (175 aa).

An HIG1 domain is found at Asp-3 to Glu-94. The next 2 membrane-spanning stretches (helical) occupy residues Pro-30–Ala-46 and Ile-66–Tyr-83. Positions Tyr-83–Ala-115 form a coiled coil.

The protein belongs to the RCF1 family. Associates with the respiratory chain complex III/complex IV supercomplex.

Its subcellular location is the mitochondrion membrane. Cytochrome c oxidase subunit which plays a role in assembly of respiratory supercomplexes. This Talaromyces marneffei (strain ATCC 18224 / CBS 334.59 / QM 7333) (Penicillium marneffei) protein is Respiratory supercomplex factor 1-B, mitochondrial (rcf1-B).